The following is a 132-amino-acid chain: Small ribosomal subunit protein uS8c (132 aa).

It belongs to the universal ribosomal protein uS8 family. As to quaternary structure, part of the 30S ribosomal subunit.

It is found in the plastid. Its subcellular location is the chloroplast. In terms of biological role, one of the primary rRNA binding proteins, it binds directly to 16S rRNA central domain where it helps coordinate assembly of the platform of the 30S subunit. This is Small ribosomal subunit protein uS8c (rps8) from Thalassiosira pseudonana (Marine diatom).